Consider the following 650-residue polypeptide: MVQITLPDGSQRQYPGPVTVAEVAQSIGTGLAKAALAGRVTVNDAEPKLVDTSFRIDQDAKLAIVTAKDADGLDLIRHSTAHLLAYAVKSLYPDAQVTIGPVIDNGFYYDFSYKRPFTPEDLQAIEKKMAELARKDEVVTREEWTRDDAVAYFKSIGENYKAEIIASIPSNEKISLYREGEFIDLCRGPHVPSTGKLKVFKLMKLAGAYWRGDSNNEMLQRIYGTAWATKDEQDAYLHMLEEAERRDHRKIGRDLDLFHFQDEGPGLIFWHPKGWTLWQQVEQYMRAVYRDNGYQEVKAPQILDLSLWKKTGHWDNYRENMFTTESENRVYGLKPMNCPGHVQIFNAGLHSYRELPLRYGEFGQCHRNEPSGSLHGMMRVRGFTQDDGHIFCTEDQLQDECADFTALLQKVYRDFGFTEVLYKVATRPEKRIGSDEIWDKAETALMESLRRTGCEFEISPGEGAFYGPKIEYTLKDAIGRHWQCGTIQVDFSMPVRLGAEYVDQNDQRRAPVMLHRAILGSLERFIGMLIENHAGAMPPWLAPVQAVVCCISEPSAEYAAKITQSLKKQGFRVQADLRGEKITRKIREHSLQKVPYILVVGDKEAQNGTVAVRGLGGLDLGAIPFDDFVARLNEDVASRRNVVQPDSKAV.

Residues 1-66 (MVQITLPDGS…DQDAKLAIVT (66 aa)) enclose the TGS domain. A catalytic region spans residues 247–538 (DHRKIGRDLD…LIENHAGAMP (292 aa)). Zn(2+) is bound by residues C338, H389, and H515.

Belongs to the class-II aminoacyl-tRNA synthetase family. In terms of assembly, homodimer. Requires Zn(2+) as cofactor.

It is found in the cytoplasm. The enzyme catalyses tRNA(Thr) + L-threonine + ATP = L-threonyl-tRNA(Thr) + AMP + diphosphate + H(+). Its function is as follows. Catalyzes the attachment of threonine to tRNA(Thr) in a two-step reaction: L-threonine is first activated by ATP to form Thr-AMP and then transferred to the acceptor end of tRNA(Thr). Also edits incorrectly charged L-seryl-tRNA(Thr). In Bordetella avium (strain 197N), this protein is Threonine--tRNA ligase.